The primary structure comprises 425 residues: NAD kinase 2, mitochondrial (425 aa).

Residues 1-45 (MDTSAIQQTLVKIYQRQAWQPPRKASKNETTVGKPRELAGGGSPA) constitute a mitochondrion transit peptide. Residues 20-46 (QPPRKASKNETTVGKPRELAGGGSPAD) form a disordered region. N6-acetyllysine; alternate is present on lysine 59. Residue lysine 59 is modified to N6-succinyllysine; alternate. Serine 171 is subject to Phosphoserine. N6-succinyllysine is present on lysine 285. Lysine 300 is subject to N6-acetyllysine; alternate. An N6-succinyllysine; alternate modification is found at lysine 300. Serine 350 carries the phosphoserine modification. Lysine 380 bears the N6-acetyllysine mark.

Belongs to the NAD kinase family. In terms of assembly, homodimer.

The protein resides in the mitochondrion. The catalysed reaction is NAD(+) + ATP = ADP + NADP(+) + H(+). Inhibited by NADH, NADPH and NADP(+). Its function is as follows. Mitochondrial NAD(+) kinase that phosphorylates NAD(+) to yield NADP(+). Can use both ATP or inorganic polyphosphate as the phosphoryl donor. This Rattus norvegicus (Rat) protein is NAD kinase 2, mitochondrial (Nadk2).